We begin with the raw amino-acid sequence, 269 residues long: Putative 12-oxophytodienoate reductase-like protein 2A (269 aa).

Residues proline 28–threonine 30 and glutamine 103 contribute to the FMN site. Residue histidine 175–histidine 178 participates in substrate binding. Catalysis depends on tyrosine 180, which acts as the Proton donor. Residue arginine 227 coordinates FMN.

This sequence belongs to the NADH:flavin oxidoreductase/NADH oxidase family. FMN is required as a cofactor.

Its function is as follows. Putative oxophytodienoate reductase that may be involved in the biosynthesis or metabolism of oxylipin signaling molecules. This is Putative 12-oxophytodienoate reductase-like protein 2A from Arabidopsis thaliana (Mouse-ear cress).